A 310-amino-acid polypeptide reads, in one-letter code: Vomeronasal type-1 receptor 90 (310 aa).

Residues 1 to 20 (MRRISTLYGVVDKQAIFFSE) are Extracellular-facing. A helical membrane pass occupies residues 21 to 41 (VVIGISFNSILFLFHIFQFLL). At 42–46 (ERRLR) the chain is on the cytoplasmic side. The chain crosses the membrane as a helical span at residues 47–67 (ITDLIISLLALIHLGMLTVMG). Residues 68–93 (FRAVDIFASQNVWNDIKCKSLAHLHR) lie on the Extracellular side of the membrane. A disulfide bond links Cys85 and Cys172. Residues 94–114 (LLRGLSLCATCLLSIFQAITL) traverse the membrane as a helical segment. Over 115 to 135 (SPRSSCLAKFKYKSTQHSLCS) the chain is Cytoplasmic. A helical membrane pass occupies residues 136–156 (LLVLWAFYMSCGTHYSFTIVA). Residues 157–183 (DYNFSSRSLIFVTESCIILPMDYITRH) lie on the Extracellular side of the membrane. Asn159 carries N-linked (GlcNAc...) asparagine glycosylation. A helical membrane pass occupies residues 184-204 (LFFILGIFRDVSFIGLMALSS). The Cytoplasmic segment spans residues 205 to 238 (GYMVALLCRHRKQAQHLHRTSLSPKASPEQRATR). The chain crosses the membrane as a helical span at residues 239–259 (TILLLMSFFVLMYCLDCTISA). Residues 260-271 (SRLMHNGEPIHH) lie on the Extracellular side of the membrane. A helical transmembrane segment spans residues 272-292 (SIQMMVSNSYATLSPLLLIVT). Topologically, residues 293 to 310 (ENRISRFLKSLLGRTVDA) are cytoplasmic.

The protein belongs to the G-protein coupled receptor 1 family. As to expression, expressed in 1-4% of neurons of the vomeronasal organ. Only one pheromone receptor gene may be expressed in a particular neuron. Not expressed in the main olfactory epithelium.

It is found in the cell membrane. Functionally, putative pheromone receptor implicated in the regulation of social as well as reproductive behavior. This is Vomeronasal type-1 receptor 90 (Vom1r90) from Rattus norvegicus (Rat).